Here is a 502-residue protein sequence, read N- to C-terminus: MVNQTHEFLLEMTGVSKEFPGVKALDKVNLNVRPHSIHALMGENGAGKSTLLKCLFGIYEKNEGNILFLGKEVNFTSSKEALESGVSMVHQELNQVKQCSVMDNIWLGRYPKKGFFVDHDKMYRDTKAIFAELDIDIDPKVKVATLSVSQMQMVEIAKAFSYDAKIVIMDEPTSSLTEKEVSHLFTIINKLKEKGCGVVYISHKMEEIFAICDEITILRDGQWVDTRPLKGLDMDQIIAMMVGRELTHRFPEKTNTPKDVILEVENLTALNQPSIQDVSFELKAGEILGVAGLVGSRRTDIVETIFGVRERSEGHIRLHGREMKNRDAHEAINNGFALVTEERRSTGIYGNLDITFNALVANVDEYKTQMGLLSDKKMKSDTQWVIDSMRVKTPSHQTHISSLSGGNQQKVIIGRWLLTQPEILMLDEPTRGIDVGAKFEIYQLILELAKKNKGIIIISSEMPELLGITDRILVMSNGRAAGIVNTKETSQNEILELASRYL.

ABC transporter domains lie at 10–245 and 255–502; these read LEMT…VGRE and NTPK…SRYL. 42–49 contributes to the ATP binding site; sequence GENGAGKS.

It belongs to the ABC transporter superfamily. Galactose/methyl galactoside importer (TC 3.A.1.2.3) family. In terms of assembly, the complex is composed of one ATP-binding protein (MglA), two transmembrane proteins (MglC) and a solute-binding protein (MglB).

The protein localises to the cell inner membrane. The catalysed reaction is D-galactose(out) + ATP + H2O = D-galactose(in) + ADP + phosphate + H(+). It catalyses the reaction methyl beta-D-galactoside(out) + ATP + H2O = methyl beta-D-galactoside(in) + ADP + phosphate + H(+). Its function is as follows. Part of the ABC transporter complex MglABC involved in galactose/methyl galactoside import. Responsible for energy coupling to the transport system. The protein is Galactose/methyl galactoside import ATP-binding protein MglA of Vibrio vulnificus (strain CMCP6).